Consider the following 405-residue polypeptide: L-rhamnonate dehydratase (405 aa).

2 residues coordinate substrate: His-33 and Arg-59. Positions 226, 252, and 280 each coordinate Mg(2+). The active-site Proton acceptor is the His-329. Position 349 (Glu-349) interacts with substrate.

It belongs to the mandelate racemase/muconate lactonizing enzyme family. RhamD subfamily. In terms of assembly, homooctamer; tetramer of dimers. The cofactor is Mg(2+).

The catalysed reaction is L-rhamnonate = 2-dehydro-3-deoxy-L-rhamnonate + H2O. Functionally, catalyzes the dehydration of L-rhamnonate to 2-keto-3-deoxy-L-rhamnonate (KDR). This is L-rhamnonate dehydratase from Salmonella paratyphi C (strain RKS4594).